Consider the following 255-residue polypeptide: Glutamate racemase (255 aa).

Substrate is bound by residues 7 to 8 and 39 to 40; these read DS and YG. The active-site Proton donor/acceptor is the Cys-70. Position 71-72 (71-72) interacts with substrate; the sequence is NT. The active-site Proton donor/acceptor is Cys-181. 182 to 183 serves as a coordination point for substrate; the sequence is TH.

The protein belongs to the aspartate/glutamate racemases family.

The catalysed reaction is L-glutamate = D-glutamate. It participates in cell wall biogenesis; peptidoglycan biosynthesis. Provides the (R)-glutamate required for cell wall biosynthesis. The polypeptide is Glutamate racemase (Helicobacter pylori (strain HPAG1)).